A 477-amino-acid polypeptide reads, in one-letter code: SH3 domain-binding protein 5 homolog (477 aa).

A coiled-coil region spans residues 12-95 (QIQIELENLN…AAVKFQRANE (84 aa)). A phosphoserine mark is found at S113 and S115. The stretch at 122–221 (NAWQEMLNHA…YSTALRNLER (100 aa)) forms a coiled coil. Disordered regions lie at residues 224–258 (EDIH…ALPS) and 276–306 (GSQM…ETGA). A compositionally biased stretch (acidic residues) spans 291 to 305 (ETEDEEDACDYDETG).

It belongs to the SH3BP5 family.

This Drosophila melanogaster (Fruit fly) protein is SH3 domain-binding protein 5 homolog (pcs).